A 261-amino-acid polypeptide reads, in one-letter code: Segregation and condensation protein A (261 aa).

Belongs to the ScpA family. As to quaternary structure, component of a cohesin-like complex composed of ScpA, ScpB and the Smc homodimer, in which ScpA and ScpB bind to the head domain of Smc. The presence of the three proteins is required for the association of the complex with DNA.

It is found in the cytoplasm. Participates in chromosomal partition during cell division. May act via the formation of a condensin-like complex containing Smc and ScpB that pull DNA away from mid-cell into both cell halves. The polypeptide is Segregation and condensation protein A (Desulfitobacterium hafniense (strain DSM 10664 / DCB-2)).